The primary structure comprises 237 residues: Class B acid phosphatase (237 aa).

The signal sequence occupies residues 1–23 (MRKVTLVFSAIAFAFSLNGVVQA). Asp69 (nucleophile) is an active-site residue. Residues Asp69 and Asp71 each coordinate Mg(2+). Asp71 acts as the Proton donor in catalysis. Residues 137-138 (TG) and Lys177 each bind substrate. Asp192 is a binding site for Mg(2+).

Belongs to the class B bacterial acid phosphatase family. As to quaternary structure, homotetramer. Mg(2+) serves as cofactor.

It localises to the periplasm. The enzyme catalyses a phosphate monoester + H2O = an alcohol + phosphate. Dephosphorylates several organic phosphate monoesters. Also has a phosphotransferase activity catalyzing the transfer of low-energy phosphate groups from organic phosphate monoesters to free hydroxyl groups of various organic compounds. The polypeptide is Class B acid phosphatase (Xenorhabdus bovienii (strain SS-2004) (Xenorhabdus nematophila subsp. bovienii)).